The sequence spans 424 residues: Enolase (424 aa).

Glutamine 163 is a (2R)-2-phosphoglycerate binding site. The active-site Proton donor is the glutamate 204. Mg(2+) contacts are provided by aspartate 241, glutamate 284, and aspartate 311. (2R)-2-phosphoglycerate-binding residues include lysine 336, arginine 365, serine 366, and lysine 387. The active-site Proton acceptor is lysine 336.

Belongs to the enolase family. Mg(2+) serves as cofactor.

The protein resides in the cytoplasm. It localises to the secreted. Its subcellular location is the cell surface. The catalysed reaction is (2R)-2-phosphoglycerate = phosphoenolpyruvate + H2O. The protein operates within carbohydrate degradation; glycolysis; pyruvate from D-glyceraldehyde 3-phosphate: step 4/5. Functionally, catalyzes the reversible conversion of 2-phosphoglycerate (2-PG) into phosphoenolpyruvate (PEP). It is essential for the degradation of carbohydrates via glycolysis. The polypeptide is Enolase (Dictyoglomus thermophilum (strain ATCC 35947 / DSM 3960 / H-6-12)).